A 91-amino-acid polypeptide reads, in one-letter code: ATP-dependent Clp protease adapter protein ClpS (91 aa).

Belongs to the ClpS family. Binds to the N-terminal domain of the chaperone ClpA.

Its function is as follows. Involved in the modulation of the specificity of the ClpAP-mediated ATP-dependent protein degradation. The protein is ATP-dependent Clp protease adapter protein ClpS of Helicobacter pylori (strain ATCC 700392 / 26695) (Campylobacter pylori).